A 429-amino-acid chain; its full sequence is UDP-N-acetylglucosamine 1-carboxyvinyltransferase (429 aa).

22 to 23 (KN) is a phosphoenolpyruvate binding site. Residue Arg102 participates in UDP-N-acetyl-alpha-D-glucosamine binding. Cys126 (proton donor) is an active-site residue. Residue Cys126 is modified to 2-(S-cysteinyl)pyruvic acid O-phosphothioketal. Residues 131-135 (RPVDL), Asp316, and Ile338 contribute to the UDP-N-acetyl-alpha-D-glucosamine site.

This sequence belongs to the EPSP synthase family. MurA subfamily.

It localises to the cytoplasm. The catalysed reaction is phosphoenolpyruvate + UDP-N-acetyl-alpha-D-glucosamine = UDP-N-acetyl-3-O-(1-carboxyvinyl)-alpha-D-glucosamine + phosphate. It functions in the pathway cell wall biogenesis; peptidoglycan biosynthesis. In terms of biological role, cell wall formation. Adds enolpyruvyl to UDP-N-acetylglucosamine. The sequence is that of UDP-N-acetylglucosamine 1-carboxyvinyltransferase from Rhodopseudomonas palustris (strain BisB18).